Here is a 66-residue protein sequence, read N- to C-terminus: Large ribosomal subunit protein bL35 (66 aa).

Residues 1-44 are compositionally biased toward basic residues; it reads MPKLKSHRGAAKRFRKTASGAIKRRGAYRNHILTKKSTKQKRHL. The disordered stretch occupies residues 1-48; that stretch reads MPKLKSHRGAAKRFRKTASGAIKRRGAYRNHILTKKSTKQKRHLRVEA.

It belongs to the bacterial ribosomal protein bL35 family.

The protein is Large ribosomal subunit protein bL35 of Legionella pneumophila (strain Corby).